An 895-amino-acid polypeptide reads, in one-letter code: Androgen receptor (895 aa).

The interval 1–533 is modulating; sequence MEVQLGLGRV…PIDYYFPPQK (533 aa). Residues 1–562 form an interaction with ZNF318 region; the sequence is MEVQLGLGRV…GSCKVFFKRA (562 aa). 2 disordered regions span residues 33–150 and 175–211; these read VIQN…LSLL and QLLQQQQQEAVSEGSSSGRAREASGAPTSSKDNYLGG. 2 stretches are compositionally biased toward low complexity: residues 44–81 and 175–200; these read AASAAPPGASLQQQQQQQQETSPRQQQQQQQGEDGSPQ and QLLQQQQQEAVSEGSSSGRAREASGA. Serine 65 is subject to Phosphoserine; by CDK9. Serine 79 is modified (phosphoserine). The span at 201–211 shows a compositional bias: polar residues; sequence PTSSKDNYLGG. Position 208 is a phosphotyrosine; by CSK (tyrosine 208). Serine 241 carries the post-translational modification Phosphoserine. Tyrosine 252 bears the Phosphotyrosine; by CSK and TNK2 mark. 4 positions are modified to phosphotyrosine; by CSK: tyrosine 292, tyrosine 331, tyrosine 342, and tyrosine 347. At tyrosine 348 the chain carries Phosphotyrosine; by CSK and TNK2. Lysine 371 participates in a covalent cross-link: Glycyl lysine isopeptide (Lys-Gly) (interchain with G-Cter in SUMO). Tyrosine 378 is subject to Phosphotyrosine; by CSK. Lysine 496 is covalently cross-linked (Glycyl lysine isopeptide (Lys-Gly) (interchain with G-Cter in SUMO)). Phosphotyrosine; by CSK occurs at positions 510 and 527. The tract at residues 527–894 is interaction with LPXN; sequence YYFPPQKTCL…GKVKPIYFHT (368 aa). Residues 534–607 constitute a DNA-binding region (nuclear receptor); that stretch reads TCLICGDEAS…AGMTLGARKL (74 aa). NR C4-type zinc fingers lie at residues 535-555 and 571-595; these read CLICGDEASGCHYGALTCGSC and CASRNDCTIDKFRRKNCPSCRLRKC. Residues 547 to 637 form an interaction with HIPK3 region; the sequence is YGALTCGSCK…TEETAQKLTV (91 aa). An interaction with CCAR1 region spans residues 567–894; the sequence is QKYLCASRND…GKVKPIYFHT (328 aa). Residues 600–894 are interaction with KAT7; the sequence is MTLGARKLKK…GKVKPIYFHT (295 aa). Residue serine 626 is modified to Phosphoserine; by STK4/MST1. Residues 644–875 enclose the NR LBD domain; it reads ECQPIFLNVL…DFPEMMAEII (232 aa). The 17beta-hydroxy-5alpha-androstan-3-one site is built by asparagine 681 and arginine 728. Glycyl lysine isopeptide (Lys-Gly) (interchain with G-Cter in ubiquitin) cross-links involve residues lysine 821 and lysine 823. Threonine 853 is a 17beta-hydroxy-5alpha-androstan-3-one binding site. Tyrosine 891 bears the Phosphotyrosine; by CSK mark.

This sequence belongs to the nuclear hormone receptor family. NR3 subfamily. As to quaternary structure, binds DNA as a homodimer. Part of a ternary complex containing AR, EFCAB6/DJBP and PARK7. Interacts with HIPK3 and NR0B2 in the presence of androgen. The ligand binding domain interacts with KAT7/HBO1 in the presence of dihydrotestosterone. Interacts with EFCAB6/DJBP, PQBP1, RANBP9, RBAK, SPDEF, SRA1, TGFB1I1 and RREB1. Interacts with ZMIZ1/ZIMP10 and ZMIZ2/ZMIP7 which both enhance its transactivation activity. Interacts with SLC30A9 and RAD54L2/ARIP4. Interacts with MACROD1 (via macro domain). Interacts via the ligand-binding domain with LXXLL and FXXLF motifs from NCOA1, NCOA2, NCOA3 and MAGEA11. Interacts (via nuclear receptor DNA binding domain and nuclear receptor ligand binding domain) with NCOA4. The AR N-terminal poly-Gln region binds Ran resulting in enhancement of AR-mediated transactivation. Ran-binding decreases as the poly-Gln length increases. Interacts with HIP1 (via coiled coil domain). Interacts (via ligand-binding domain) with TRIM68. Interacts with TNK2. Interacts with USP26. Interacts with RNF6. Interacts (regulated by RNF6 probably through polyubiquitination) with RNF14; regulates AR transcriptional activity. Interacts with PRMT2 and TRIM24. Interacts with RACK1. Interacts with RANBP10; this interaction enhances dihydrotestosterone-induced AR transcriptional activity. Interacts with PRPF6 in a hormone-independent way; this interaction enhances dihydrotestosterone-induced AR transcriptional activity. Interacts with STK4/MST1. Interacts with ZIPK/DAPK3. Interacts with LPXN. Interacts with MAK. Part of a complex containing AR, MAK and NCOA3. Interacts with CRY1. Interacts with CCAR1 and GATA2. Interacts with ZNF318. Interacts with BUD31. Interacts with ARID4A. Interacts with ARID4B. Interacts (via NR LBD domain) with ZBTB7A; the interaction is direct and androgen-dependent. Interacts with NCOR1. Interacts with NCOR2. Interacts with CRY2 in a ligand-dependent manner. Phosphorylated in prostate cancer cells in response to several growth factors including EGF. Phosphorylation is induced by c-Src kinase (CSK). Tyr-510 is one of the major phosphorylation sites and an increase in phosphorylation and Src kinase activity is associated with prostate cancer progression. Phosphorylation by TNK2 enhances the DNA-binding and transcriptional activity. Phosphorylation at Ser-65 by CDK9 regulates AR promoter selectivity and cell growth. In terms of processing, sumoylated on Lys-371 (major) and Lys-496. Ubiquitinated. Deubiquitinated by USP26. 'Lys-6' and 'Lys-27'-linked polyubiquitination by RNF6 modulates AR transcriptional activity and specificity. Post-translationally, palmitoylated by ZDHHC7 and ZDHHC21. Palmitoylation is required for plasma membrane targeting and for rapid intracellular signaling via ERK and AKT kinases and cAMP generation.

Its subcellular location is the nucleus. It localises to the cytoplasm. In terms of biological role, steroid hormone receptors are ligand-activated transcription factors that regulate eukaryotic gene expression and affect cellular proliferation and differentiation in target tissues. Transcription factor activity is modulated by bound coactivator and corepressor proteins like ZBTB7A that recruits NCOR1 and NCOR2 to the androgen response elements/ARE on target genes, negatively regulating androgen receptor signaling and androgen-induced cell proliferation. Transcription activation is also down-regulated by NR0B2. Activated, but not phosphorylated, by HIPK3 and ZIPK/DAPK3. The chain is Androgen receptor (AR) from Macaca fascicularis (Crab-eating macaque).